A 90-amino-acid chain; its full sequence is Putative regulatory protein Cbei_1140 (90 aa).

Belongs to the RemA family.

The protein is Putative regulatory protein Cbei_1140 of Clostridium beijerinckii (strain ATCC 51743 / NCIMB 8052) (Clostridium acetobutylicum).